The chain runs to 88 residues: CLAVATA3/ESR (CLE)-related protein 42 (88 aa).

A signal peptide spans 1 to 24; that stretch reads MRSPHITISLVFLFFLFLIIQTHQ. Residues 69–88 form a disordered region; the sequence is KMIGANEHGVPSGPNPISNR. 2 positions are modified to hydroxyproline: Pro79 and Pro82. O-linked (Ara...) hydroxyproline glycosylation occurs at Pro82.

The protein belongs to the CLV3/ESR signal peptide family. The O-glycosylation (arabinosylation) of the hydroxyproline Pro-82 enhances binding affinity of the CLE42p peptide for its receptor. As to expression, expressed at low levels in seedlings, roots and inflorescence.

The protein localises to the secreted. It is found in the extracellular space. In terms of biological role, extracellular signal peptide that regulates cell fate. Represses tracheary element differentiation but promotes the formation of procambial cells. The chain is CLAVATA3/ESR (CLE)-related protein 42 from Arabidopsis thaliana (Mouse-ear cress).